The following is a 423-amino-acid chain: Mannose-6-phosphate isomerase (423 aa).

Residue Ala2 is modified to N-acetylalanine. Residues Ser102 and Ser108 each carry the phosphoserine modification. Zn(2+)-binding residues include Gln110, His112, Glu137, and His276. Residue Arg295 is part of the active site.

It belongs to the mannose-6-phosphate isomerase type 1 family. It depends on Zn(2+) as a cofactor.

It is found in the cytoplasm. The enzyme catalyses D-mannose 6-phosphate = D-fructose 6-phosphate. It functions in the pathway nucleotide-sugar biosynthesis; GDP-alpha-D-mannose biosynthesis; alpha-D-mannose 1-phosphate from D-fructose 6-phosphate: step 1/2. Its function is as follows. Isomerase that catalyzes the interconversion of fructose-6-P and mannose-6-P and has a critical role in the supply of D-mannose derivatives required for many eukaryotic glycosylation reactions. The chain is Mannose-6-phosphate isomerase (MPI) from Pan troglodytes (Chimpanzee).